Here is a 128-residue protein sequence, read N- to C-terminus: Large ribosomal subunit protein bL17 (128 aa).

This sequence belongs to the bacterial ribosomal protein bL17 family. In terms of assembly, part of the 50S ribosomal subunit. Contacts protein L32.

In Pseudomonas savastanoi pv. phaseolicola (strain 1448A / Race 6) (Pseudomonas syringae pv. phaseolicola (strain 1448A / Race 6)), this protein is Large ribosomal subunit protein bL17.